The chain runs to 248 residues: ATP synthase subunit a, chloroplastic (248 aa).

Helical transmembrane passes span Ala-37–Ala-57, Val-96–Phe-116, Ile-135–His-155, Leu-200–Leu-220, and Gly-221–Gly-241.

Belongs to the ATPase A chain family. F-type ATPases have 2 components, CF(1) - the catalytic core - and CF(0) - the membrane proton channel. CF(1) has five subunits: alpha(3), beta(3), gamma(1), delta(1), epsilon(1). CF(0) has four main subunits: a, b, b' and c.

It is found in the plastid. The protein localises to the chloroplast thylakoid membrane. Key component of the proton channel; it plays a direct role in the translocation of protons across the membrane. The sequence is that of ATP synthase subunit a, chloroplastic from Angiopteris evecta (Mule's foot fern).